A 727-amino-acid chain; its full sequence is MSKTVVLAEKPSVGRDLARVLKCHKKGNGYLEGDQYIVTWALGHLVTLADPEGYGKEFQSWRLEDLPIIPEPLKLVVIKKTGKQFNAVKSQLTRKDVNQIVIATDAGREGELVARWIIEKANVRKPIKRLWISSVTDKAIKEGFQKLRSGKEYENLYHSAVARAEADWIVGINATRALTTKFNAQLSCGRVQTPTLAMIAKREADIQAFTPVPYYGIRAAVDGMTLTWQDKKSKQTRTFNQDVTSRLLKNLQGKQAVVAELKKTAKKSFAPALYDLTELQRDAHKRFGFSAKETLSVLQKLYEQHKLVTYPRTDSRFLSSDIVPTLKDRLEGMEVKPYAQYVSQIKKRGIKSHKGYVNDAKVSDHHAIIPTEEPLVLSSLSDKERKLYDLIAKRFLAVLMPAFEYEETKVIAEIGGETFTAKGKTVQSQGWKAVYDMAEEDDEQEDDRDQTLPALQKGDTLAVRTLTETSGQTKPPARFNEGTLLSAMENPSAFMQGEEKGLVKTLGETGGLGTVATRADIIEKLFNSFLIEKKGQDIFITSKGKQLLQLVPEDLKSPALTAEWEQKLSAIAAGKLKSAVFIKDMKAYAHQTVKEIKNSSQTFRHDNITGTACPECGKMMLKVNGKRGTMLVCQDRECGSRKTIARKTNARCPNCHKRMELRGQGEGQTFACVCGHREKLSVFEKRKNKDKARATKRDVSSYMKKQNKDEPINNALAEQLKKLGLDK.

The region spanning 3-136 (KTVVLAEKPS…IKRLWISSVT (134 aa)) is the Toprim domain. The Mg(2+) site is built by E9 and D105. The Topo IA-type catalytic domain maps to 153–593 (YENLYHSAVA…DMKAYAHQTV (441 aa)). The tract at residues 187-192 (SCGRVQ) is interaction with DNA. Y310 (O-(5'-phospho-DNA)-tyrosine intermediate) is an active-site residue. The segment covering 685 to 699 (KRKNKDKARATKRDV) has biased composition (basic and acidic residues). Positions 685–714 (KRKNKDKARATKRDVSSYMKKQNKDEPINN) are disordered.

The protein belongs to the type IA topoisomerase family. The cofactor is Mg(2+).

The catalysed reaction is ATP-independent breakage of single-stranded DNA, followed by passage and rejoining.. In terms of biological role, releases the supercoiling and torsional tension of DNA, which is introduced during the DNA replication and transcription, by transiently cleaving and rejoining one strand of the DNA duplex. Introduces a single-strand break via transesterification at a target site in duplex DNA. The scissile phosphodiester is attacked by the catalytic tyrosine of the enzyme, resulting in the formation of a DNA-(5'-phosphotyrosyl)-enzyme intermediate and the expulsion of a 3'-OH DNA strand. The free DNA strand then undergoes passage around the unbroken strand, thus removing DNA supercoils. Finally, in the religation step, the DNA 3'-OH attacks the covalent intermediate to expel the active-site tyrosine and restore the DNA phosphodiester backbone. In Bacillus subtilis (strain 168), this protein is DNA topoisomerase 3.